A 1184-amino-acid polypeptide reads, in one-letter code: DNA-directed RNA polymerase subunit beta' (1184 aa).

4 residues coordinate Zn(2+): Cys60, Cys62, Cys75, and Cys78. Residues Asp449, Asp451, and Asp453 each coordinate Mg(2+). 4 residues coordinate Zn(2+): Cys794, Cys867, Cys874, and Cys877.

The protein belongs to the RNA polymerase beta' chain family. In terms of assembly, the RNAP catalytic core consists of 2 alpha, 1 beta, 1 beta' and 1 omega subunit. When a sigma factor is associated with the core the holoenzyme is formed, which can initiate transcription. Mg(2+) is required as a cofactor. It depends on Zn(2+) as a cofactor.

The enzyme catalyses RNA(n) + a ribonucleoside 5'-triphosphate = RNA(n+1) + diphosphate. DNA-dependent RNA polymerase catalyzes the transcription of DNA into RNA using the four ribonucleoside triphosphates as substrates. This chain is DNA-directed RNA polymerase subunit beta', found in Thermoanaerobacter sp. (strain X514).